The primary structure comprises 226 residues: Octanoyltransferase (226 aa).

The region spanning 31–226 (PETPDALWIC…SQKLGTYLAP (196 aa)) is the BPL/LPL catalytic domain. Residues 70 to 77 (RGGQVTFH), 159 to 161 (ALG), and 172 to 174 (GVA) each bind substrate. The active-site Acyl-thioester intermediate is cysteine 190.

This sequence belongs to the LipB family.

The protein resides in the cytoplasm. It catalyses the reaction octanoyl-[ACP] + L-lysyl-[protein] = N(6)-octanoyl-L-lysyl-[protein] + holo-[ACP] + H(+). Its pathway is protein modification; protein lipoylation via endogenous pathway; protein N(6)-(lipoyl)lysine from octanoyl-[acyl-carrier-protein]: step 1/2. Its function is as follows. Catalyzes the transfer of endogenously produced octanoic acid from octanoyl-acyl-carrier-protein onto the lipoyl domains of lipoate-dependent enzymes. Lipoyl-ACP can also act as a substrate although octanoyl-ACP is likely to be the physiological substrate. This chain is Octanoyltransferase, found in Variovorax paradoxus (strain S110).